Consider the following 103-residue polypeptide: PTS system lactose-specific EIIA component (103 aa).

The region spanning 1–102 is the PTS EIIA type-3 domain; the sequence is MNREEVQLLG…MKHLLEFYKR (102 aa). The Tele-phosphohistidine intermediate role is filled by histidine 78. Histidine 78 is modified (phosphohistidine; by HPr). Residue aspartate 81 participates in Mg(2+) binding.

Homotrimer. Mg(2+) is required as a cofactor.

It is found in the cytoplasm. Functionally, the phosphoenolpyruvate-dependent sugar phosphotransferase system (sugar PTS), a major carbohydrate active transport system, catalyzes the phosphorylation of incoming sugar substrates concomitantly with their translocation across the cell membrane. The enzyme II LacEF PTS system is involved in lactose transport. In Staphylococcus aureus (strain COL), this protein is PTS system lactose-specific EIIA component.